The chain runs to 120 residues: NADH-ubiquinone oxidoreductase chain 3 (120 aa).

Helical transmembrane passes span 10 to 30 (ILIL…LGYF), 62 to 82 (FYLV…LFPF), and 89 to 109 (MTLF…IGFI).

The protein belongs to the complex I subunit 3 family.

It localises to the mitochondrion membrane. The catalysed reaction is a ubiquinone + NADH + 5 H(+)(in) = a ubiquinol + NAD(+) + 4 H(+)(out). Functionally, core subunit of the mitochondrial membrane respiratory chain NADH dehydrogenase (Complex I) that is believed to belong to the minimal assembly required for catalysis. Complex I functions in the transfer of electrons from NADH to the respiratory chain. The immediate electron acceptor for the enzyme is believed to be ubiquinone. This is NADH-ubiquinone oxidoreductase chain 3 (nad3) from Dictyostelium citrinum (Slime mold).